Consider the following 614-residue polypeptide: ATP-dependent rRNA helicase SPB4 (614 aa).

A Q motif motif is present at residues 10–38 (WSVLKCDLHPWIKEAIKSLGYPTMTPVQA). The 193-residue stretch at 41–233 (IPLFSGNKDV…RTGMANPVKI (193 aa)) folds into the Helicase ATP-binding domain. An ATP-binding site is contributed by 54–61 (AVTGSGKT). Positions 181 to 184 (DEAD) match the DEAD box motif. Positions 260–431 (KISALIALIK…KFQKKFRKYM (172 aa)) constitute a Helicase C-terminal domain. Residues 510 to 581 (EYADKQKEES…IEKQLMDDSS (72 aa)) are a coiled coil. Over residues 514–529 (KQKEESRKKNLEEDKA) the composition is skewed to basic and acidic residues. A disordered region spans residues 514–614 (KQKEESRKKN…DSMQGSFDDL (101 aa)). Residues 530 to 541 (RKVHDAKKRKEL) are compositionally biased toward basic residues. Basic and acidic residues-rich tracts occupy residues 551–563 (KTDK…ERRE) and 584–595 (EETKVDWKEMVK). Residues 604-614 (SDSMQGSFDDL) show a composition bias toward polar residues.

This sequence belongs to the DEAD box helicase family. DDX55/SPB4 subfamily. As to quaternary structure, component of pre-60S ribosomal complexes.

The protein resides in the nucleus. It localises to the nucleolus. The catalysed reaction is ATP + H2O = ADP + phosphate + H(+). In terms of biological role, ATP-binding RNA helicase involved in the biogenesis of 60S ribosomal subunits. Binds 90S pre-ribosomal particles and dissociates from pre-60S ribosomal particles after processing of 27SB pre-rRNA. Required for the normal formation of 18S rRNA through the processing of pre-rRNAs at sites A0, A1 and A2, and the normal formation of 25S and 5.8S rRNAs through the processing of pre-rRNAs at sites C1 and C2. This is ATP-dependent rRNA helicase SPB4 from Debaryomyces hansenii (strain ATCC 36239 / CBS 767 / BCRC 21394 / JCM 1990 / NBRC 0083 / IGC 2968) (Yeast).